Here is a 143-residue protein sequence, read N- to C-terminus: 3-hydroxyacyl-[acyl-carrier-protein] dehydratase FabZ (143 aa).

The active site involves histidine 49.

Belongs to the thioester dehydratase family. FabZ subfamily.

The protein localises to the cytoplasm. It carries out the reaction a (3R)-hydroxyacyl-[ACP] = a (2E)-enoyl-[ACP] + H2O. Functionally, involved in unsaturated fatty acids biosynthesis. Catalyzes the dehydration of short chain beta-hydroxyacyl-ACPs and long chain saturated and unsaturated beta-hydroxyacyl-ACPs. In Wolbachia pipientis wMel, this protein is 3-hydroxyacyl-[acyl-carrier-protein] dehydratase FabZ.